The primary structure comprises 643 residues: UvrABC system protein C (643 aa).

Positions 25-104 (AEPGVYFMRD…IKQHQPHFNV (80 aa)) constitute a GIY-YIG domain. In terms of domain architecture, UVR spans 214 to 249 (SELVELLEAQMLQAAENLEFEKAAKIRDQIRGLEGL).

This sequence belongs to the UvrC family. In terms of assembly, interacts with UvrB in an incision complex.

The protein localises to the cytoplasm. Functionally, the UvrABC repair system catalyzes the recognition and processing of DNA lesions. UvrC both incises the 5' and 3' sides of the lesion. The N-terminal half is responsible for the 3' incision and the C-terminal half is responsible for the 5' incision. The protein is UvrABC system protein C of Synechococcus elongatus (strain ATCC 33912 / PCC 7942 / FACHB-805) (Anacystis nidulans R2).